A 200-amino-acid chain; its full sequence is dTTP/UTP pyrophosphatase (200 aa).

Aspartate 76 serves as the catalytic Proton acceptor.

This sequence belongs to the Maf family. YhdE subfamily. A divalent metal cation is required as a cofactor.

It localises to the cytoplasm. It carries out the reaction dTTP + H2O = dTMP + diphosphate + H(+). The enzyme catalyses UTP + H2O = UMP + diphosphate + H(+). In terms of biological role, nucleoside triphosphate pyrophosphatase that hydrolyzes dTTP and UTP. May have a dual role in cell division arrest and in preventing the incorporation of modified nucleotides into cellular nucleic acids. The chain is dTTP/UTP pyrophosphatase from Acetivibrio thermocellus (strain ATCC 27405 / DSM 1237 / JCM 9322 / NBRC 103400 / NCIMB 10682 / NRRL B-4536 / VPI 7372) (Clostridium thermocellum).